The chain runs to 97 residues: Putative mitochondrial import inner membrane translocase subunit Tim8 A-B (97 aa).

The Twin CX3C motif signature appears at Cys43 to Cys66. Cystine bridges form between Cys43/Cys66 and Cys47/Cys62.

This sequence belongs to the small Tim family. Heterohexamer; possibly composed of 3 copies of TIMM8AB and 3 copies of TIMM13.

It localises to the mitochondrion inner membrane. Putative mitochondrial intermembrane chaperone that participates in the import and insertion of some multi-pass transmembrane proteins into the mitochondrial inner membrane. Also required for the transfer of beta-barrel precursors from the TOM complex to the sorting and assembly machinery (SAM complex) of the outer membrane. Acts as a chaperone-like protein that protects the hydrophobic precursors from aggregation and guide them through the mitochondrial intermembrane space. The protein is Putative mitochondrial import inner membrane translocase subunit Tim8 A-B (Timm8a2) of Mus musculus (Mouse).